The sequence spans 107 residues: Nucleoid-associated protein RC1337 (107 aa).

The protein belongs to the YbaB/EbfC family. Homodimer.

It is found in the cytoplasm. It localises to the nucleoid. Binds to DNA and alters its conformation. May be involved in regulation of gene expression, nucleoid organization and DNA protection. The protein is Nucleoid-associated protein RC1337 of Rickettsia conorii (strain ATCC VR-613 / Malish 7).